The following is a 169-amino-acid chain: MKGSRIELGDVTPHNIKQLKRLNQVIFPVSYNDKFYKDVLEVGELAKLAYFNDIAVGAVCCRVDHSQNQKRLYIMTLGCLAPYRRLGIGTKMLNHVLNICEKDGTFDNIYLHVQISNESAIDFYRKFGFEIIETKKNYYKRIEPADAHVLQKNLKVPSGQNADVQKTDN.

The N-acetyltransferase domain occupies 6 to 155; the sequence is IELGDVTPHN…DAHVLQKNLK (150 aa). Thr12 bears the Phosphothreonine mark. Tyr31 provides a ligand contact to substrate. N6-acetyllysine occurs at positions 34 and 37. Tyr73 is a catalytic residue. Met75 provides a ligand contact to substrate. An acetyl-CoA-binding site is contributed by 77 to 90; the sequence is LGCLAPYRRLGIGT. Residue Tyr110 is modified to Phosphotyrosine. His112 is an active-site residue. 117–126 provides a ligand contact to CoA; that stretch reads NESAIDFYRK. Positions 138–141 are substrate; it reads YYKR. N6-acetyllysine is present on Lys140.

Belongs to the acetyltransferase family. GNAT subfamily. Component of the N-terminal acetyltransferase E (NatE) complex at least composed of NAA10, NAA15 and NAA50. Interacts with NAA10. Interacts with NAA15. Predominantly interacts with NAA15 in the N-terminal acetyltransferase A complex (NatA complex); the interactions reduce the acetylation activity of the NatA complex. Component of the N-terminal acetyltransferase E (NatE)/HYPK complex at least composed of NAA10, NAA15, NAA50 and HYPK. Within the complex interacts with NAA15. Its capacity to interact with the NatA complex is reduced by HYPK. Interacts with NAA35.

The protein resides in the cytoplasm. Its subcellular location is the nucleus. It carries out the reaction N-terminal L-methionyl-L-alanyl-[protein] + acetyl-CoA = N-terminal N(alpha)-acetyl-L-methionyl-L-alanyl-[protein] + CoA + H(+). It catalyses the reaction N-terminal L-methionyl-L-seryl-[protein] + acetyl-CoA = N-terminal N(alpha)-acetyl-L-methionyl-L-seryl-[protein] + CoA + H(+). The enzyme catalyses N-terminal L-methionyl-L-valyl-[protein] + acetyl-CoA = N-terminal N(alpha)-acetyl-L-methionyl-L-valyl-[protein] + CoA + H(+). The catalysed reaction is N-terminal L-methionyl-L-threonyl-[protein] + acetyl-CoA = N-terminal N(alpha)-acetyl-L-methionyl-L-threonyl-[protein] + CoA + H(+). It carries out the reaction N-terminal L-methionyl-L-lysyl-[protein] + acetyl-CoA = N-terminal N(alpha)-acetyl-L-methionyl-L-lysyl-[protein] + CoA + H(+). It catalyses the reaction N-terminal L-methionyl-L-leucyl-[protein] + acetyl-CoA = N-terminal N(alpha)-acetyl-L-methionyl-L-leucyl-[protein] + CoA + H(+). The enzyme catalyses N-terminal L-methionyl-L-phenylalanyl-[protein] + acetyl-CoA = N-terminal N(alpha)-acetyl-L-methionyl-L-phenylalanyl-[protein] + CoA + H(+). The catalysed reaction is N-terminal L-methionyl-L-tyrosyl-[protein] + acetyl-CoA = N-terminal N(alpha)-acetyl-L-methionyl-L-tyrosyl-[protein] + CoA + H(+). Functionally, N-alpha-acetyltransferase that acetylates the N-terminus of proteins that retain their initiating methionine. Has a broad substrate specificity: able to acetylate the initiator methionine of most peptides, except for those with a proline in second position. Also displays N-epsilon-acetyltransferase activity by mediating acetylation of the side chain of specific lysines on proteins. Autoacetylates in vivo. The relevance of N-epsilon-acetyltransferase activity is however unclear: able to acetylate H4 in vitro, but this result has not been confirmed in vivo. Component of N-alpha-acetyltransferase complexes containing NAA10 and NAA15, which has N-alpha-acetyltransferase activity. Does not influence the acetyltransferase activity of NAA10. However, it negatively regulates the N-alpha-acetyltransferase activity of the N-terminal acetyltransferase A complex (also called the NatA complex). The multiprotein complexes probably constitute the major contributor for N-terminal acetylation at the ribosome exit tunnel, with NAA10 acetylating all amino termini that are devoid of methionine and NAA50 acetylating other peptides. Required for sister chromatid cohesion during mitosis by promoting binding of CDCA5/sororin to cohesin: may act by counteracting the function of NAA10. The protein is N-alpha-acetyltransferase 50 (NAA50) of Bos taurus (Bovine).